The primary structure comprises 1868 residues: Dedicator of cytokinesis protein 5 (1868 aa).

An SH3 domain is found at 8–69 (KRQKYGVAIY…PETYIHLKEA (62 aa)). Residue Ser-365 is modified to Phosphoserine. Residues 443 to 627 (RNDIYVTLIH…DSFQIATLIC (185 aa)) enclose the C2 DOCK-type domain. Position 818 is an N6-acetyllysine (Lys-818). Residues 1231–1642 (YKDKKREDIY…VEKLYGVITL (412 aa)) enclose the DOCKER domain. Residues 1681–1692 (STSSNSSDNASS) are compositionally biased toward low complexity. 2 disordered regions span residues 1681–1730 (STSS…RISK) and 1742–1868 (QVIA…PGSQ). Residues 1704–1728 (LFERRASSGARVEDLPPKEDSENRI) are compositionally biased toward basic and acidic residues. Phosphoserine occurs at positions 1755, 1765, 1771, 1784, and 1788. The residue at position 1793 (Thr-1793) is a Phosphothreonine. Residues 1796 to 1810 (ATRTLSSPSLQTDGL) are compositionally biased toward polar residues. Phosphoserine is present on residues Ser-1832 and Ser-1867.

The protein belongs to the DOCK family. As to quaternary structure, interacts with CRK and CRKL. Interacts (via N-terminus) with tensin TNS3 (via N-terminus); the interaction increases DOCK5 guanine nucleotide exchange activity towards Rac. Interacts with ELMO1. In terms of tissue distribution, highly expressed in lens, where it predominantly localizes to anterior epithelial cells, and is weakly expressed in lens fiber (at protein level). Expressed in brain, eye, lung, spleen and kidney, but not in thymus or peripheral blood leukocytes.

The protein resides in the cytoplasm. It localises to the cell membrane. The protein localises to the cell projection. It is found in the podosome. Functionally, guanine nucleotide exchange factor (GEF) for Rho and Rac. GEF proteins activate small GTPases by exchanging bound GDP for free GTP. Along with DOCK1, mediates CRK/CRKL regulation of epithelial and endothelial cell spreading and migration on type IV collagen. This chain is Dedicator of cytokinesis protein 5, found in Mus musculus (Mouse).